The sequence spans 312 residues: Acetyl-coenzyme A carboxylase carboxyl transferase subunit alpha (312 aa).

Residues 32–286 enclose the CoA carboxyltransferase C-terminal domain; that stretch reads LLEERLARLR…KEALLKALEE (255 aa).

This sequence belongs to the AccA family. Acetyl-CoA carboxylase is a heterohexamer composed of biotin carboxyl carrier protein (AccB), biotin carboxylase (AccC) and two subunits each of ACCase subunit alpha (AccA) and ACCase subunit beta (AccD).

It localises to the cytoplasm. The catalysed reaction is N(6)-carboxybiotinyl-L-lysyl-[protein] + acetyl-CoA = N(6)-biotinyl-L-lysyl-[protein] + malonyl-CoA. It participates in lipid metabolism; malonyl-CoA biosynthesis; malonyl-CoA from acetyl-CoA: step 1/1. Its function is as follows. Component of the acetyl coenzyme A carboxylase (ACC) complex. First, biotin carboxylase catalyzes the carboxylation of biotin on its carrier protein (BCCP) and then the CO(2) group is transferred by the carboxyltransferase to acetyl-CoA to form malonyl-CoA. The sequence is that of Acetyl-coenzyme A carboxylase carboxyl transferase subunit alpha from Thermus thermophilus (strain ATCC BAA-163 / DSM 7039 / HB27).